The primary structure comprises 203 residues: Lipoprotein MlpJ (203 aa).

Positions 1–17 are cleaved as a signal peptide; that stretch reads MKIINILFCISLLLLNS. Residue cysteine 18 is the site of N-palmitoyl cysteine attachment. Cysteine 18 is lipidated: S-diacylglycerol cysteine. The tract at residues 26–47 is disordered; that stretch reads LKNNAQQTKSRKKRDLSQEELP.

It belongs to the Multicopy lipoprotein (Mlp) family.

Its subcellular location is the cell outer membrane. Functionally, an outer membrane protein that may participate in pathogenesis. Some human Lyme disease patients have antibodies against this protein. The Mlp proteins probably undergo intragenic recombination, generating new alleles. This is Lipoprotein MlpJ from Borreliella burgdorferi (strain ATCC 35210 / DSM 4680 / CIP 102532 / B31) (Borrelia burgdorferi).